The chain runs to 101 residues: Vacuolar ATPase assembly integral membrane protein VMA21 (101 aa).

The Cytoplasmic portion of the chain corresponds to 1–25; the sequence is MERLDKAALNALQPSDFRNESSLAS. Residues 26 to 46 traverse the membrane as a helical segment; it reads TLKTLLFFTALMITVPIGLYF. The Lumenal segment spans residues 47-65; it reads TTKSYVFEGAFGMSNRDSY. The helical transmembrane segment at 66-86 threads the bilayer; sequence FYAAIVAVVAVHVVLALFVYV. Topologically, residues 87–101 are cytoplasmic; sequence AWNEGSRQWREGKQD.

It belongs to the VMA21 family. As to quaternary structure, associates with the V0 complex of the vacuolar ATPase (V-ATPase). Interacts with ATP6AP2.

It is found in the endoplasmic reticulum membrane. Its subcellular location is the endoplasmic reticulum-Golgi intermediate compartment membrane. The protein resides in the cytoplasmic vesicle. The protein localises to the COPII-coated vesicle membrane. Functionally, required for the assembly of the V0 complex of the vacuolar ATPase (V-ATPase) in the endoplasmic reticulum. This chain is Vacuolar ATPase assembly integral membrane protein VMA21, found in Bos taurus (Bovine).